Here is a 90-residue protein sequence, read N- to C-terminus: Albumin-1 (90 aa).

A signal peptide is located at residue alanine 1. 3 cysteine pairs are disulfide-bonded: cysteine 4–cysteine 21, cysteine 8–cysteine 23, and cysteine 16–cysteine 34. A propeptide spanning residues 40–47 (LSSVAKMI) is cleaved from the precursor.

The C-terminal glycine may be removed from A1b.

A1b binds to basic 7S globulin (BG) and stimulates its phosphorylation activity. The polypeptide is Albumin-1 (LEG) (Phaseolus angularis (Azuki bean)).